Consider the following 1144-residue polypeptide: ATP-dependent helicase/deoxyribonuclease subunit B (1144 aa).

Residues 1–276 (MAIRYVFGRA…IDLDRNERPV (276 aa)) enclose the UvrD-like helicase ATP-binding domain. Residue 8-15 (GRAGRGKS) participates in ATP binding. Positions 274 to 584 (RPVLPKVQEI…LVGSIERSKS (311 aa)) constitute a UvrD-like helicase C-terminal domain. The [4Fe-4S] cluster site is built by cysteine 784, cysteine 1102, cysteine 1105, and cysteine 1111.

This sequence belongs to the helicase family. AddB/RexB type 1 subfamily. In terms of assembly, heterodimer of AddA and AddB. It depends on Mg(2+) as a cofactor. [4Fe-4S] cluster is required as a cofactor.

In terms of biological role, the heterodimer acts as both an ATP-dependent DNA helicase and an ATP-dependent, dual-direction single-stranded exonuclease. Recognizes the chi site generating a DNA molecule suitable for the initiation of homologous recombination. The AddB subunit has 5' -&gt; 3' nuclease activity but not helicase activity. The chain is ATP-dependent helicase/deoxyribonuclease subunit B from Alkaliphilus oremlandii (strain OhILAs) (Clostridium oremlandii (strain OhILAs)).